Consider the following 356-residue polypeptide: Glutamine synthetase PR-2 (356 aa).

The GS beta-grasp domain maps to 19–99; it reads IIAEYIWVGG…VICDVYTPAG (81 aa). Residues 37–66 are disordered; that stretch reads ARTLPGPVDDPAKLPKWNYDGSSTDQAPGD. Positions 106–356 constitute a GS catalytic domain; it reads KRYDAAKIFS…IAETTILWKP (251 aa).

This sequence belongs to the glutamine synthetase family. In terms of assembly, homooctamer. As to expression, roots.

It is found in the cytoplasm. The enzyme catalyses L-glutamate + NH4(+) + ATP = L-glutamine + ADP + phosphate + H(+). In Phaseolus vulgaris (Kidney bean), this protein is Glutamine synthetase PR-2.